The following is a 440-amino-acid chain: Chromosome partition protein MukF (440 aa).

The interval 208–236 (LSETSGTLRELQDTLEAAGDKLQANLLRI) is leucine-zipper.

Belongs to the MukF family. In terms of assembly, interacts, and probably forms a ternary complex, with MukE and MukB via its C-terminal region. The complex formation is stimulated by calcium or magnesium. It is required for an interaction between MukE and MukB.

The protein resides in the cytoplasm. It is found in the nucleoid. In terms of biological role, involved in chromosome condensation, segregation and cell cycle progression. May participate in facilitating chromosome segregation by condensation DNA from both sides of a centrally located replisome during cell division. Not required for mini-F plasmid partitioning. Probably acts via its interaction with MukB and MukE. Overexpression results in anucleate cells. It has a calcium binding activity. The polypeptide is Chromosome partition protein MukF (Salmonella typhi).